Reading from the N-terminus, the 104-residue chain is Pyrimidine/purine nucleoside phosphorylase (104 aa).

It belongs to the nucleoside phosphorylase PpnP family.

The catalysed reaction is a purine D-ribonucleoside + phosphate = a purine nucleobase + alpha-D-ribose 1-phosphate. It catalyses the reaction adenosine + phosphate = alpha-D-ribose 1-phosphate + adenine. The enzyme catalyses cytidine + phosphate = cytosine + alpha-D-ribose 1-phosphate. It carries out the reaction guanosine + phosphate = alpha-D-ribose 1-phosphate + guanine. The catalysed reaction is inosine + phosphate = alpha-D-ribose 1-phosphate + hypoxanthine. It catalyses the reaction thymidine + phosphate = 2-deoxy-alpha-D-ribose 1-phosphate + thymine. The enzyme catalyses uridine + phosphate = alpha-D-ribose 1-phosphate + uracil. It carries out the reaction xanthosine + phosphate = alpha-D-ribose 1-phosphate + xanthine. Its function is as follows. Catalyzes the phosphorolysis of diverse nucleosides, yielding D-ribose 1-phosphate and the respective free bases. Can use uridine, adenosine, guanosine, cytidine, thymidine, inosine and xanthosine as substrates. Also catalyzes the reverse reactions. The polypeptide is Pyrimidine/purine nucleoside phosphorylase (Janthinobacterium sp. (strain Marseille) (Minibacterium massiliensis)).